The chain runs to 439 residues: Trigger factor (439 aa).

The region spanning 175–260 (GDRVTISYRS…VERLSVKDEI (86 aa)) is the PPIase FKBP-type domain.

It belongs to the FKBP-type PPIase family. Tig subfamily.

It is found in the cytoplasm. The catalysed reaction is [protein]-peptidylproline (omega=180) = [protein]-peptidylproline (omega=0). Functionally, involved in protein export. Acts as a chaperone by maintaining the newly synthesized protein in an open conformation. Functions as a peptidyl-prolyl cis-trans isomerase. The chain is Trigger factor from Anaplasma phagocytophilum (strain HZ).